The primary structure comprises 207 residues: ATP synthase subunit b (207 aa).

The first 27 residues, 1 to 27, serve as a signal peptide directing secretion; the sequence is MKLRATFVFKTTLVALSFALFALFLVS. A lipid anchor (N-palmitoyl cysteine) is attached at Cys-28. Residue Cys-28 is the site of S-diacylglycerol cysteine attachment. A helical membrane pass occupies residues 49 to 69; the sequence is WVFLAHLLAFVILLFLLLFLF.

This sequence belongs to the ATPase B chain family. In terms of assembly, F-type ATPases have 2 components, F(1) - the catalytic core - and F(0) - the membrane proton channel. F(1) has five subunits: alpha(3), beta(3), gamma(1), delta(1), epsilon(1). F(0) has three main subunits: a(1), b(2) and c(10-14). The alpha and beta chains form an alternating ring which encloses part of the gamma chain. F(1) is attached to F(0) by a central stalk formed by the gamma and epsilon chains, while a peripheral stalk is formed by the delta and b chains.

The protein resides in the cell membrane. Its function is as follows. F(1)F(0) ATP synthase produces ATP from ADP in the presence of a proton or sodium gradient. F-type ATPases consist of two structural domains, F(1) containing the extramembraneous catalytic core and F(0) containing the membrane proton channel, linked together by a central stalk and a peripheral stalk. During catalysis, ATP synthesis in the catalytic domain of F(1) is coupled via a rotary mechanism of the central stalk subunits to proton translocation. Functionally, component of the F(0) channel, it forms part of the peripheral stalk, linking F(1) to F(0). The protein is ATP synthase subunit b of Mycoplasma pneumoniae (strain ATCC 29342 / M129 / Subtype 1) (Mycoplasmoides pneumoniae).